Here is a 399-residue protein sequence, read N- to C-terminus: Elongation factor Tu (399 aa).

The region spanning 10–207 (KPHVNVGTIG…ALDSYIPEPV (198 aa)) is the tr-type G domain. The G1 stretch occupies residues 19-26 (GHIDHGKT). 19-26 (GHIDHGKT) lines the GTP pocket. Thr26 contributes to the Mg(2+) binding site. Positions 60 to 64 (GITIN) are G2. A G3 region spans residues 81–84 (DCPG). GTP-binding positions include 81 to 85 (DCPGH) and 136 to 139 (NKVD). The tract at residues 136-139 (NKVD) is G4. Residues 174–176 (SAL) are G5.

This sequence belongs to the TRAFAC class translation factor GTPase superfamily. Classic translation factor GTPase family. EF-Tu/EF-1A subfamily. As to quaternary structure, monomer.

It is found in the cytoplasm. It catalyses the reaction GTP + H2O = GDP + phosphate + H(+). Functionally, GTP hydrolase that promotes the GTP-dependent binding of aminoacyl-tRNA to the A-site of ribosomes during protein biosynthesis. This chain is Elongation factor Tu, found in Pseudothermotoga lettingae (strain ATCC BAA-301 / DSM 14385 / NBRC 107922 / TMO) (Thermotoga lettingae).